The following is a 191-amino-acid chain: NF-kappa-B inhibitor-interacting Ras-like protein 2 (191 aa).

Positions 1–191 (MGKSCKVVVC…KNKGSGSLDG (191 aa)) are small GTPase-like. 11-18 (GQASVGKT) lines the GTP pocket. Residues 35–43 (MIETQEDIY) carry the Effector region motif. Residues 61–65 (DTRGL) and 120–123 (NKCD) contribute to the GTP site. The tract at residues 169-191 (TQPQSKSAFPLSRKNKGSGSLDG) is disordered.

Belongs to the small GTPase superfamily. Ras family. KappaB-Ras subfamily. As to quaternary structure, interacts with both NF-kappa-B inhibitor alpha (NFKBIA) and beta (NFKBIB) in vitro. However, it probably only interacts with NFKBIB in vivo. Interacts with GFOD1. In terms of tissue distribution, widely expressed.

It localises to the cytoplasm. Atypical Ras-like protein that acts as a potent regulator of NF-kappa-B activity by preventing the degradation of NF-kappa-B inhibitor beta (NFKBIB) by most signals, explaining why NFKBIB is more resistant to degradation. May act by blocking phosphorylation of NFKBIB and nuclear localization of p65/RELA NF-kappa-B subunit. It is unclear whether it acts as a GTPase. Both GTP- and GDP-bound forms block phosphorylation of NFKBIB. The polypeptide is NF-kappa-B inhibitor-interacting Ras-like protein 2 (NKIRAS2) (Homo sapiens (Human)).